The primary structure comprises 326 residues: tRNA-modifying protein YgfZ (326 aa).

The folate site is built by tryptophan 27 and tryptophan 189.

This sequence belongs to the tRNA-modifying YgfZ family.

The protein localises to the cytoplasm. Functionally, folate-binding protein involved in regulating the level of ATP-DnaA and in the modification of some tRNAs. It is probably a key factor in regulatory networks that act via tRNA modification, such as initiation of chromosomal replication. This chain is tRNA-modifying protein YgfZ, found in Shigella dysenteriae serotype 1 (strain Sd197).